Reading from the N-terminus, the 352-residue chain is Protein Wnt-3a (352 aa).

Positions M1–A18 are cleaved as a signal peptide. 9 disulfides stabilise this stretch: C77–C88, C128–C136, C138–C155, C203–C217, C205–C212, C297–C312, C327–C342, C329–C339, and C334–C335. N87 carries N-linked (GlcNAc...) asparagine glycosylation. S209 carries O-palmitoleoyl serine lipidation. A glycan (N-linked (GlcNAc...) asparagine) is linked at N298.

Belongs to the Wnt family. Post-translationally, disulfide bonds have critical and distinct roles in secretion and activity. Loss of each conserved cysteine results in high molecular weight oxidized Wnt oligomers, which are formed through inter-Wnt disulfide bonding. In terms of processing, palmitoleoylation is required for efficient binding to frizzled receptors. Depalmitoleoylation leads to Wnt signaling pathway inhibition. At neurula in anterior neural fold; at tailbud in dorsal midline of midbrain.

It localises to the secreted. Its subcellular location is the extracellular space. The protein localises to the extracellular matrix. Ligand for members of the frizzled family of seven transmembrane receptors. Functions in the canonical Wnt signaling pathway that results in activation of transcription factors of the TCF/LEF family. Required for normal embryonic mesoderm development and formation of caudal somites. Required for normal morphogenesis of the developing neural tube. This Xenopus laevis (African clawed frog) protein is Protein Wnt-3a (wnt3a).